The following is a 459-amino-acid chain: tRNA modification GTPase MnmE (459 aa).

The (6S)-5-formyl-5,6,7,8-tetrahydrofolate site is built by R23, E86, and R125. Residues G221–Y380 enclose the TrmE-type G domain. Position 231 (N231) interacts with K(+). GTP contacts are provided by residues N231 to S236, T250 to T256, and D275 to G278. Residue S235 coordinates Mg(2+). K(+)-binding residues include T250, I252, and T255. Position 256 (T256) interacts with Mg(2+). A (6S)-5-formyl-5,6,7,8-tetrahydrofolate-binding site is contributed by K459.

This sequence belongs to the TRAFAC class TrmE-Era-EngA-EngB-Septin-like GTPase superfamily. TrmE GTPase family. In terms of assembly, homodimer. Heterotetramer of two MnmE and two MnmG subunits. It depends on K(+) as a cofactor.

The protein localises to the cytoplasm. In terms of biological role, exhibits a very high intrinsic GTPase hydrolysis rate. Involved in the addition of a carboxymethylaminomethyl (cmnm) group at the wobble position (U34) of certain tRNAs, forming tRNA-cmnm(5)s(2)U34. The polypeptide is tRNA modification GTPase MnmE (Clostridioides difficile (strain 630) (Peptoclostridium difficile)).